A 256-amino-acid chain; its full sequence is Phosphoribosylaminoimidazole-succinocarboxamide synthase (256 aa).

A disordered region spans residues K234–R256. Residues A240–R256 are compositionally biased toward basic residues.

This sequence belongs to the SAICAR synthetase family.

It catalyses the reaction 5-amino-1-(5-phospho-D-ribosyl)imidazole-4-carboxylate + L-aspartate + ATP = (2S)-2-[5-amino-1-(5-phospho-beta-D-ribosyl)imidazole-4-carboxamido]succinate + ADP + phosphate + 2 H(+). Its pathway is purine metabolism; IMP biosynthesis via de novo pathway; 5-amino-1-(5-phospho-D-ribosyl)imidazole-4-carboxamide from 5-amino-1-(5-phospho-D-ribosyl)imidazole-4-carboxylate: step 1/2. The sequence is that of Phosphoribosylaminoimidazole-succinocarboxamide synthase from Methanoregula boonei (strain DSM 21154 / JCM 14090 / 6A8).